We begin with the raw amino-acid sequence, 433 residues long: Chaperone SurA (433 aa).

The first 28 residues, 1-28, serve as a signal peptide directing secretion; it reads MTAITRITLTGALLAAALLLAALQPARA. PpiC domains lie at 174–277 and 286–386; these read NQEY…KLMD and VTET…QVTD.

The protein resides in the periplasm. The catalysed reaction is [protein]-peptidylproline (omega=180) = [protein]-peptidylproline (omega=0). Its function is as follows. Chaperone involved in the correct folding and assembly of outer membrane proteins. Recognizes specific patterns of aromatic residues and the orientation of their side chains, which are found more frequently in integral outer membrane proteins. May act in both early periplasmic and late outer membrane-associated steps of protein maturation. In Alkalilimnicola ehrlichii (strain ATCC BAA-1101 / DSM 17681 / MLHE-1), this protein is Chaperone SurA.